Here is a 226-residue protein sequence, read N- to C-terminus: Endonuclease NucS (226 aa).

Belongs to the NucS endonuclease family.

The protein resides in the cytoplasm. Cleaves both 3' and 5' ssDNA extremities of branched DNA structures. The protein is Endonuclease NucS of Mycobacterium tuberculosis (strain ATCC 25618 / H37Rv).